The chain runs to 138 residues: Gene 64 protein (138 aa).

The chain is Gene 64 protein (64) from Mycobacterium (Mycobacteriophage D29).